The sequence spans 513 residues: Zinc finger protein RFP (513 aa).

An RING-type zinc finger spans residues 16–57; sequence CPVCLQYFAEPMMLDCGHNICCACLARCWGTAETNVSCPQCR. Zn(2+)-binding residues include Cys96, His99, Cys118, and His124. The B box-type zinc finger occupies 96 to 127; it reads CEKHREPLKLYCEEDQMPICVVCDRSREHRGH. 2 coiled-coil regions span residues 132 to 172 and 282 to 311; these read LEEA…AELL and QKCL…LREA. Residues 298–492 form the B30.2/SPRY domain; sequence MQSDMEKIQE…SAAPLIICPM (195 aa).

Belongs to the TRIM/RBCC family. In terms of assembly, homomultimerizes. Part of a complex consisting of TRIM27, USP7 and MAGEL2; directly interacts with USP7. Interacts with PML, EIF3S6, EPC1, CHD4 and EID1. Interacts with MAGED4, MAGEF1 and MAGEL2. Interacts with PTPN11. Interacts with autophagy receptor p62/SQSTM1. As to quaternary structure, (Microbial infection) Interacts with M.tuberculosis PtpA, whick blocks TRIM27-promoted JNK/p38 MAPK pathway activation and cell apoptosis. (Microbial infection) Interacts with herpes simplex virus protein ICP0. In terms of tissue distribution, expressed in testis namely within the seminiferous tubules.

The protein resides in the nucleus. The protein localises to the cytoplasm. It is found in the PML body. Its subcellular location is the early endosome. It localises to the mitochondrion. The enzyme catalyses S-ubiquitinyl-[E2 ubiquitin-conjugating enzyme]-L-cysteine + [acceptor protein]-L-lysine = [E2 ubiquitin-conjugating enzyme]-L-cysteine + N(6)-ubiquitinyl-[acceptor protein]-L-lysine.. The protein operates within protein modification; protein ubiquitination. Its function is as follows. E3 ubiquitin-protein ligase that mediates ubiquitination of various substrates and thereby plays a role in diffent processes including proliferation, innate immunity, apoptosis, immune response or autophagy. Ubiquitinates PIK3C2B and inhibits its activity by mediating the formation of 'Lys-48'-linked polyubiquitin chains; the function inhibits CD4 T-cell activation. Acts as a regulator of retrograde transport: together with MAGEL2, mediates the formation of 'Lys-63'-linked polyubiquitin chains at 'Lys-220' of WASHC1, leading to promote endosomal F-actin assembly. Has a transcriptional repressor activity by cooperating with EPC1. Induces apoptosis by activating Jun N-terminal kinase and p38 kinase and also increases caspase-3-like activity independently of mitochondrial events. May function in male germ cell development. Has DNA-binding activity and preferentially bound to double-stranded DNA. Forms a complex with and ubiquitinates the ubiquitin-specific protease USP7, which in turn deubiquitinates RIPK1 resulting in the positive regulation of TNF-alpha-induced apoptosis. In addition, acts with USP7 or PTPN11 as an inhibitor of the antiviral signaling pathway by promoting kinase TBK1 ubiquitination and degradation. Acts as a negative regulator of NOD2 signaling by mediating ubiquitination of NOD2, promoting its degradation by the proteasome. Alternatively, facilitates mitophagy via stabilization of active TBK1. Negatively regulates autophagy flux under basal conditions by directly polyubiquitinating ULK1. During starvation-induced autophagy, catalyzes non-degradative ubiquitination of the kinase STK38L promoting its activation and phosphorylation of ULK1 leading to its ubiquitination and degradation to restrain the amplitude and duration of autophagy. In terms of biological role, (Microbial infection) Positively regulates hepatitis C virus replication by suppressing type I IFN response during infection. This Homo sapiens (Human) protein is Zinc finger protein RFP.